A 96-amino-acid polypeptide reads, in one-letter code: Acylphosphatase (96 aa).

The 93-residue stretch at 4–96 folds into the Acylphosphatase-like domain; it reads RCEFLIFGKV…ESLNDFEILR (93 aa). Residues R19 and N42 contribute to the active site.

The protein belongs to the acylphosphatase family.

It carries out the reaction an acyl phosphate + H2O = a carboxylate + phosphate + H(+). This Helicobacter hepaticus (strain ATCC 51449 / 3B1) protein is Acylphosphatase (acyP).